Reading from the N-terminus, the 767-residue chain is Protein transport protein Sec23A (767 aa).

4 residues coordinate Zn(2+): C61, C66, C85, and C88. A Gelsolin-like repeat occupies 634–720; the sequence is PEPVLLDSSS…EHGGSQARFL (87 aa).

It belongs to the SEC23/SEC24 family. SEC23 subfamily. As to quaternary structure, COPII is composed of at least five proteins: the Sec23/24 complex, the Sec13/31 complex and Sar1.

Its subcellular location is the cytoplasmic vesicle. The protein localises to the COPII-coated vesicle membrane. The protein resides in the endoplasmic reticulum membrane. It localises to the cytoplasm. It is found in the cytosol. Functionally, component of the coat protein complex II (COPII) which promotes the formation of transport vesicles from the endoplasmic reticulum (ER). The coat has two main functions, the physical deformation of the endoplasmic reticulum membrane into vesicles and the selection of cargo molecules for their transport to the Golgi complex. In Gallus gallus (Chicken), this protein is Protein transport protein Sec23A.